The primary structure comprises 647 residues: ATP-dependent zinc metalloprotease FtsH (647 aa).

Residues 1-33 (MARKSDEDTNPMDKFMDRLRGSPGDGGPGRPDP) are disordered. At 1 to 39 (MARKSDEDTNPMDKFMDRLRGSPGDGGPGRPDPSQRKVH) the chain is on the cytoplasmic side. A helical transmembrane segment spans residues 40 to 60 (FSIWYFILALLLIVWMQTYMG). The Periplasmic portion of the chain corresponds to 61–134 (EQQSEKISYS…RFSGDVQNPW (74 aa)). Residues 135–155 (LGLITWWLLPFAIMIFFWSFL) traverse the membrane as a helical segment. Residues 156–647 (MRRMGGGPQG…DPVQVEGGAA (492 aa)) lie on the Cytoplasmic side of the membrane. 227-234 (GAPGTGKT) provides a ligand contact to ATP. His-449 contributes to the Zn(2+) binding site. The active site involves Glu-450. The Zn(2+) site is built by His-453 and Asp-526.

The protein in the central section; belongs to the AAA ATPase family. It in the C-terminal section; belongs to the peptidase M41 family. Homohexamer. Requires Zn(2+) as cofactor.

It localises to the cell inner membrane. Functionally, acts as a processive, ATP-dependent zinc metallopeptidase for both cytoplasmic and membrane proteins. Plays a role in the quality control of integral membrane proteins. This chain is ATP-dependent zinc metalloprotease FtsH, found in Syntrophobacter fumaroxidans (strain DSM 10017 / MPOB).